A 271-amino-acid polypeptide reads, in one-letter code: Ribosomal RNA small subunit methyltransferase A (271 aa).

6 residues coordinate S-adenosyl-L-methionine: histidine 11, leucine 13, glycine 38, glutamate 58, aspartate 86, and asparagine 101.

It belongs to the class I-like SAM-binding methyltransferase superfamily. rRNA adenine N(6)-methyltransferase family. RsmA subfamily.

The protein localises to the cytoplasm. It catalyses the reaction adenosine(1518)/adenosine(1519) in 16S rRNA + 4 S-adenosyl-L-methionine = N(6)-dimethyladenosine(1518)/N(6)-dimethyladenosine(1519) in 16S rRNA + 4 S-adenosyl-L-homocysteine + 4 H(+). Specifically dimethylates two adjacent adenosines (A1518 and A1519) in the loop of a conserved hairpin near the 3'-end of 16S rRNA in the 30S particle. May play a critical role in biogenesis of 30S subunits. This is Ribosomal RNA small subunit methyltransferase A from Helicobacter acinonychis (strain Sheeba).